Consider the following 527-residue polypeptide: tRNA-2-methylthio-N(6)-dimethylallyladenosine synthase (527 aa).

Residues 1–27 (MMNEKQRLQYTAQIETDHPTDKKSALD) are disordered. Residues 15-27 (ETDHPTDKKSALD) are compositionally biased toward basic and acidic residues. Residues 84-202 (RKFYIRTYGC…LPYILKEAYM (119 aa)) enclose the MTTase N-terminal domain. 6 residues coordinate [4Fe-4S] cluster: C93, C129, C163, C239, C243, and C246. A Radical SAM core domain is found at 225 to 455 (RKGNIKAWVN…NALVNEISAK (231 aa)). In terms of domain architecture, TRAM spans 458–521 (KEYEGQVVEV…TWTLNGEMVE (64 aa)).

Belongs to the methylthiotransferase family. MiaB subfamily. Monomer. [4Fe-4S] cluster is required as a cofactor.

The protein resides in the cytoplasm. It carries out the reaction N(6)-dimethylallyladenosine(37) in tRNA + (sulfur carrier)-SH + AH2 + 2 S-adenosyl-L-methionine = 2-methylsulfanyl-N(6)-dimethylallyladenosine(37) in tRNA + (sulfur carrier)-H + 5'-deoxyadenosine + L-methionine + A + S-adenosyl-L-homocysteine + 2 H(+). Its function is as follows. Catalyzes the methylthiolation of N6-(dimethylallyl)adenosine (i(6)A), leading to the formation of 2-methylthio-N6-(dimethylallyl)adenosine (ms(2)i(6)A) at position 37 in tRNAs that read codons beginning with uridine. The polypeptide is tRNA-2-methylthio-N(6)-dimethylallyladenosine synthase (Anoxybacillus flavithermus (strain DSM 21510 / WK1)).